The chain runs to 286 residues: Shikimate dehydrogenase (NADP(+)) (286 aa).

Shikimate contacts are provided by residues 22 to 24 and threonine 71; that span reads SRS. Residue lysine 75 is the Proton acceptor of the active site. Glutamate 87 serves as a coordination point for NADP(+). Shikimate-binding residues include asparagine 96 and aspartate 111. NADP(+) contacts are provided by residues 136–140, 160–165, and isoleucine 225; these read GAGGA and NRTPER. Tyrosine 227 is a shikimate binding site. Position 248 (glycine 248) interacts with NADP(+).

The protein belongs to the shikimate dehydrogenase family. In terms of assembly, homodimer.

The enzyme catalyses shikimate + NADP(+) = 3-dehydroshikimate + NADPH + H(+). The protein operates within metabolic intermediate biosynthesis; chorismate biosynthesis; chorismate from D-erythrose 4-phosphate and phosphoenolpyruvate: step 4/7. Involved in the biosynthesis of the chorismate, which leads to the biosynthesis of aromatic amino acids. Catalyzes the reversible NADPH linked reduction of 3-dehydroshikimate (DHSA) to yield shikimate (SA). In Rhizobium meliloti (strain 1021) (Ensifer meliloti), this protein is Shikimate dehydrogenase (NADP(+)).